The sequence spans 497 residues: Lysine--tRNA ligase (497 aa).

Glutamate 405 and glutamate 412 together coordinate Mg(2+).

It belongs to the class-II aminoacyl-tRNA synthetase family. In terms of assembly, homodimer. It depends on Mg(2+) as a cofactor.

It localises to the cytoplasm. It carries out the reaction tRNA(Lys) + L-lysine + ATP = L-lysyl-tRNA(Lys) + AMP + diphosphate. This Gloeobacter violaceus (strain ATCC 29082 / PCC 7421) protein is Lysine--tRNA ligase.